A 478-amino-acid polypeptide reads, in one-letter code: Methionine aminopeptidase 2 (478 aa).

The segment at 1 to 122 is disordered; the sequence is MAGVEEVAAS…TDPPSVPICD (122 aa). Alanine 2 carries the N-acetylalanine modification. Basic residues predominate over residues 36–46; it reads KKKRRKKKKSK. A Phosphoserine modification is found at serine 45. The segment covering 55–79 has biased composition (basic and acidic residues); sequence EPDKESGASVDEVARQLERSALEDK. Phosphoserine; alternate occurs at positions 60 and 63. Residues serine 60 and serine 63 are each glycosylated (O-linked (GlcNAc) serine; alternate). Serine 74 carries the post-translational modification Phosphoserine. Acidic residues predominate over residues 80–92; that stretch reads ERDEDDEDGDGDG. The segment covering 97 to 109 has biased composition (basic residues); sequence GKKKKKKKKKRGP. Histidine 231 provides a ligand contact to substrate. 3 residues coordinate a divalent metal cation: aspartate 251, aspartate 262, and histidine 331. Histidine 339 serves as a coordination point for substrate. A divalent metal cation-binding residues include glutamate 364 and glutamate 459.

It belongs to the peptidase M24A family. Methionine aminopeptidase eukaryotic type 2 subfamily. In terms of assembly, interacts strongly with the eIF-2 gamma-subunit EIF2S3. Binds EIF2S1 at low magnesium concentrations. Co(2+) serves as cofactor. It depends on Zn(2+) as a cofactor. Requires Mn(2+) as cofactor. Fe(2+) is required as a cofactor. In terms of processing, contains approximately 12 O-linked N-acetylglucosamine (GlcNAc) residues. O-glycosylation is required for EIF2S1 binding.

The protein localises to the cytoplasm. The enzyme catalyses Release of N-terminal amino acids, preferentially methionine, from peptides and arylamides.. In terms of biological role, cotranslationally removes the N-terminal methionine from nascent proteins. The N-terminal methionine is often cleaved when the second residue in the primary sequence is small and uncharged (Met-Ala-, Cys, Gly, Pro, Ser, Thr, or Val). The catalytic activity of human METAP2 toward Met-Val peptides is consistently two orders of magnitude higher than that of METAP1, suggesting that it is responsible for processing proteins containing N-terminal Met-Val and Met-Thr sequences in vivo. Protects eukaryotic initiation factor EIF2S1 from translation-inhibiting phosphorylation by inhibitory kinases such as EIF2AK2/PKR and EIF2AK1/HCR. Plays a critical role in the regulation of protein synthesis. In Homo sapiens (Human), this protein is Methionine aminopeptidase 2.